The following is a 200-amino-acid chain: Mpv17-like protein 2 (200 aa).

The next 3 membrane-spanning stretches (helical) occupy residues 24-40 (ALLL…MAAG), 63-83 (ASMF…YLWL), and 102-122 (VLVD…LGLG).

Belongs to the peroxisomal membrane protein PXMP2/4 family. Interacts with the large mitochondrial ribosomal subunit.

It is found in the membrane. It localises to the mitochondrion inner membrane. In terms of biological role, required for the assembly and stability of the mitochondrial ribosome. Is a positive regulator of mitochondrial protein synthesis. In Mus musculus (Mouse), this protein is Mpv17-like protein 2 (Mpv17l2).